The chain runs to 930 residues: Isoleucine--tRNA ligase (930 aa).

The 'HIGH' region motif lies at 57–67 (PYANGHIHLGT). Position 559 (E559) interacts with L-isoleucyl-5'-AMP. The short motif at 600–604 (KMSKS) is the 'KMSKS' region element. Residue K603 participates in ATP binding. Residues C899, C902, C918, and C921 each contribute to the Zn(2+) site.

The protein belongs to the class-I aminoacyl-tRNA synthetase family. IleS type 1 subfamily. As to quaternary structure, monomer. The cofactor is Zn(2+).

The protein localises to the cytoplasm. It catalyses the reaction tRNA(Ile) + L-isoleucine + ATP = L-isoleucyl-tRNA(Ile) + AMP + diphosphate. Its function is as follows. Catalyzes the attachment of isoleucine to tRNA(Ile). As IleRS can inadvertently accommodate and process structurally similar amino acids such as valine, to avoid such errors it has two additional distinct tRNA(Ile)-dependent editing activities. One activity is designated as 'pretransfer' editing and involves the hydrolysis of activated Val-AMP. The other activity is designated 'posttransfer' editing and involves deacylation of mischarged Val-tRNA(Ile). This chain is Isoleucine--tRNA ligase, found in Desulforudis audaxviator (strain MP104C).